The chain runs to 200 residues: Cation channel sperm-associated auxiliary subunit zeta (200 aa).

Basic and acidic residues predominate over residues Met-1–Asp-29. Disordered stretches follow at residues Met-1 to Trp-31 and Asn-58 to Lys-78.

Component of the CatSper complex or CatSpermasome composed of the core pore-forming members CATSPER1, CATSPER2, CATSPER3 and CATSPER4 as well as auxiliary members CATSPERB, CATSPERG, CATSPERD, CATSPERE, CATSPERZ, C2CD6/CATSPERT, TMEM249, TMEM262 and EFCAB9. HSPA1 may be an additional auxiliary complex member. The core complex members CATSPER1, CATSPER2, CATSPER3 and CATSPER4 form a heterotetrameric channel. The auxiliary CATSPERB, CATSPERG, CATSPERD and CATSPERE subunits form a pavilion-like structure over the pore which stabilizes the complex through interactions with CATSPER4, CATSPER3, CATSPER1 and CATSPER2 respectively. TMEM262/CATSPERH interacts with CATSPERB, further stabilizing the complex. C2CD6/CATSPERT interacts at least with CATSPERD and is required for targeting the CatSper complex in the flagellar membrane. Interacts with EFCAB9; the interaction is direct, Ca(2+)-dependent and connects EFCAB9 with the CatSper complex. Dissociates from EFCAB9 at elevated pH.

The protein resides in the cell projection. The protein localises to the cilium. It is found in the flagellum membrane. In terms of biological role, auxiliary component of the CatSper complex, a complex involved in sperm cell hyperactivation. Sperm cell hyperactivation is needed for sperm motility which is essential late in the preparation of sperm for fertilization. Required for a distribution of the CatSper complex in linear quadrilateral nanodomains along the flagellum, maximizing fertilization inside the mammalian female reproductive tract. Together with EFCAB9, associates with the CatSper channel pore and is required for the two-row structure of each single CatSper channel. This is Cation channel sperm-associated auxiliary subunit zeta from Homo sapiens (Human).